An 89-amino-acid polypeptide reads, in one-letter code: Small ribosomal subunit protein bS16c (89 aa).

Belongs to the bacterial ribosomal protein bS16 family.

The protein localises to the plastid. It is found in the chloroplast. The protein is Small ribosomal subunit protein bS16c of Morus indica (Mulberry).